A 149-amino-acid polypeptide reads, in one-letter code: MEVILLEKVRNLGNLGDKVHVKSGYGRNYLIPQNKAVFATEQNIELFEKRRAELEKKAQQALANAEQRAAKLNDTTIVISAMASDEGKLYGSVGVNEIKDALIEKQIEISKREIVMPEGPLHSIGNYVVEVHVHSDVVANLQVEIIPAK.

This sequence belongs to the bacterial ribosomal protein bL9 family.

In terms of biological role, binds to the 23S rRNA. In Legionella pneumophila subsp. pneumophila (strain Philadelphia 1 / ATCC 33152 / DSM 7513), this protein is Large ribosomal subunit protein bL9.